Here is a 473-residue protein sequence, read N- to C-terminus: Photosystem II CP43 reaction center protein (473 aa).

Positions 1–14 (MKTLYSLRRFYHVE) are excised as a propeptide. Thr15 bears the N-acetylthreonine mark. Thr15 bears the Phosphothreonine mark. The next 5 helical transmembrane spans lie at 69–93 (LFEV…PHLA), 134–155 (LLGP…KDRN), 178–200 (KALY…RKIT), 255–275 (KPFA…LSYS), and 291–312 (WFNN…ASQA). Position 367 (Glu367) interacts with [CaMn4O5] cluster. Residues 447–471 (RARAAAAGFEKGIDRDFEPVLSMTP) traverse the membrane as a helical segment.

This sequence belongs to the PsbB/PsbC family. PsbC subfamily. PSII is composed of 1 copy each of membrane proteins PsbA, PsbB, PsbC, PsbD, PsbE, PsbF, PsbH, PsbI, PsbJ, PsbK, PsbL, PsbM, PsbT, PsbX, PsbY, PsbZ, Psb30/Ycf12, at least 3 peripheral proteins of the oxygen-evolving complex and a large number of cofactors. It forms dimeric complexes. Requires Binds multiple chlorophylls and provides some of the ligands for the Ca-4Mn-5O cluster of the oxygen-evolving complex. It may also provide a ligand for a Cl- that is required for oxygen evolution. PSII binds additional chlorophylls, carotenoids and specific lipids. as cofactor.

Its subcellular location is the plastid. It localises to the chloroplast thylakoid membrane. One of the components of the core complex of photosystem II (PSII). It binds chlorophyll and helps catalyze the primary light-induced photochemical processes of PSII. PSII is a light-driven water:plastoquinone oxidoreductase, using light energy to abstract electrons from H(2)O, generating O(2) and a proton gradient subsequently used for ATP formation. This is Photosystem II CP43 reaction center protein from Phaseolus vulgaris (Kidney bean).